The following is a 448-amino-acid chain: Homogentisate 1,2-dioxygenase (448 aa).

Histidine 302 functions as the Proton acceptor in the catalytic mechanism. Histidine 345 and glutamate 351 together coordinate Fe cation. Residues tyrosine 360 and histidine 381 each coordinate homogentisate. Histidine 381 lines the Fe cation pocket.

It belongs to the homogentisate dioxygenase family. As to quaternary structure, hexamer; dimer of trimers. Requires Fe cation as cofactor.

The catalysed reaction is homogentisate + O2 = 4-maleylacetoacetate + H(+). It participates in amino-acid degradation; L-phenylalanine degradation; acetoacetate and fumarate from L-phenylalanine: step 4/6. Involved in the catabolism of homogentisate (2,5-dihydroxyphenylacetate or 2,5-OH-PhAc), a central intermediate in the degradation of phenylalanine and tyrosine. Catalyzes the oxidative ring cleavage of the aromatic ring of homogentisate to yield maleylacetoacetate. In Ralstonia pickettii (strain 12J), this protein is Homogentisate 1,2-dioxygenase.